Here is a 388-residue protein sequence, read N- to C-terminus: bZIP transcription factor 1-D (388 aa).

Disordered stretches follow at residues 1–49 (MGSS…PIPP), 103–249 (FAPY…GPTT), 261–316 (TASS…RKQA), and 348–388 (ELLS…KDTN). 2 stretches are compositionally biased toward low complexity: residues 23 to 33 (PPATSSTATPT) and 117 to 129 (AAGTTTTAATAGG). The span at 169-179 (SGASANGTISQ) shows a compositional bias: polar residues. A compositionally biased stretch (low complexity) spans 180–193 (SGESGSESSSEGSE). Residues 214–231 (RSSQNGVSPSPSQAQLKQ) are compositionally biased toward polar residues. Residues 293-356 (ELKRQKRKQS…DELLSKNSSL (64 aa)) enclose the bZIP domain. The basic motif stretch occupies residues 295–314 (KRQKRKQSNRDSARRSRLRK). The segment covering 302 to 316 (SNRDSARRSRLRKQA) has biased composition (basic and acidic residues). Positions 321-356 (LAQRAEVLKQENASLKDEVSRIRKEYDELLSKNSSL) are leucine-zipper. Composition is skewed to basic and acidic residues over residues 359 to 369 (NVGDKQHKTDE) and 375 to 388 (KLQHSGDDSQKDTN).

It belongs to the bZIP family. Highly expressed in roots and at lower levels in stems and leaves.

It localises to the nucleus. In terms of biological role, probable transcription factor that may be involved in responses to fungal pathogen infection and abiotic stresses. The protein is bZIP transcription factor 1-D of Triticum aestivum (Wheat).